The following is a 287-amino-acid chain: ATP synthase gamma chain (287 aa).

The protein belongs to the ATPase gamma chain family. F-type ATPases have 2 components, CF(1) - the catalytic core - and CF(0) - the membrane proton channel. CF(1) has five subunits: alpha(3), beta(3), gamma(1), delta(1), epsilon(1). CF(0) has three main subunits: a, b and c.

It localises to the cell membrane. Its function is as follows. Produces ATP from ADP in the presence of a proton gradient across the membrane. The gamma chain is believed to be important in regulating ATPase activity and the flow of protons through the CF(0) complex. This Wolbachia sp. subsp. Drosophila simulans (strain wRi) protein is ATP synthase gamma chain.